The primary structure comprises 277 residues: Large ribosomal subunit protein uL2 (277 aa).

Residues Thr-219–Lys-277 form a disordered region. Residues Ala-264–Lys-277 are compositionally biased toward basic and acidic residues.

It belongs to the universal ribosomal protein uL2 family. As to quaternary structure, part of the 50S ribosomal subunit. Forms a bridge to the 30S subunit in the 70S ribosome.

Functionally, one of the primary rRNA binding proteins. Required for association of the 30S and 50S subunits to form the 70S ribosome, for tRNA binding and peptide bond formation. It has been suggested to have peptidyltransferase activity; this is somewhat controversial. Makes several contacts with the 16S rRNA in the 70S ribosome. The sequence is that of Large ribosomal subunit protein uL2 from Streptococcus sanguinis (strain SK36).